The chain runs to 456 residues: Bifunctional protein GlmU (456 aa).

Residues 1–230 (MDKRFAVILA…FQETLGVNDR (230 aa)) form a pyrophosphorylase region. Residues 9–12 (LAAG), K23, Q73, and 78–79 (GT) contribute to the UDP-N-acetyl-alpha-D-glucosamine site. A Mg(2+)-binding site is contributed by D103. Residues G140, E155, N170, and N228 each contribute to the UDP-N-acetyl-alpha-D-glucosamine site. Residue N228 participates in Mg(2+) binding. The segment at 231–251 (VALSQAEMYMKERINKRHMQN) is linker. The segment at 252–456 (GVTLIDPMNT…EDYVKNIHKK (205 aa)) is N-acetyltransferase. 2 residues coordinate UDP-N-acetyl-alpha-D-glucosamine: R333 and K351. The active-site Proton acceptor is H363. Positions 366 and 377 each coordinate UDP-N-acetyl-alpha-D-glucosamine. Residues 386 to 387 (NY), A423, and R440 contribute to the acetyl-CoA site.

It in the N-terminal section; belongs to the N-acetylglucosamine-1-phosphate uridyltransferase family. In the C-terminal section; belongs to the transferase hexapeptide repeat family. Homotrimer. Mg(2+) serves as cofactor.

The protein localises to the cytoplasm. The catalysed reaction is alpha-D-glucosamine 1-phosphate + acetyl-CoA = N-acetyl-alpha-D-glucosamine 1-phosphate + CoA + H(+). It catalyses the reaction N-acetyl-alpha-D-glucosamine 1-phosphate + UTP + H(+) = UDP-N-acetyl-alpha-D-glucosamine + diphosphate. The protein operates within nucleotide-sugar biosynthesis; UDP-N-acetyl-alpha-D-glucosamine biosynthesis; N-acetyl-alpha-D-glucosamine 1-phosphate from alpha-D-glucosamine 6-phosphate (route II): step 2/2. Its pathway is nucleotide-sugar biosynthesis; UDP-N-acetyl-alpha-D-glucosamine biosynthesis; UDP-N-acetyl-alpha-D-glucosamine from N-acetyl-alpha-D-glucosamine 1-phosphate: step 1/1. It participates in bacterial outer membrane biogenesis; LPS lipid A biosynthesis. Its function is as follows. Catalyzes the last two sequential reactions in the de novo biosynthetic pathway for UDP-N-acetylglucosamine (UDP-GlcNAc). The C-terminal domain catalyzes the transfer of acetyl group from acetyl coenzyme A to glucosamine-1-phosphate (GlcN-1-P) to produce N-acetylglucosamine-1-phosphate (GlcNAc-1-P), which is converted into UDP-GlcNAc by the transfer of uridine 5-monophosphate (from uridine 5-triphosphate), a reaction catalyzed by the N-terminal domain. The polypeptide is Bifunctional protein GlmU (Bacillus velezensis (strain DSM 23117 / BGSC 10A6 / LMG 26770 / FZB42) (Bacillus amyloliquefaciens subsp. plantarum)).